The sequence spans 561 residues: SH3 domain-binding protein 2 (561 aa).

The region spanning 26-130 (GVAKAGYLHK…WMALLRREIG (105 aa)) is the PH domain. 2 disordered regions span residues 160-316 (VDIS…GACS) and 333-451 (KLKS…YEKV). Positions 170–188 (DNEDYEHDDEDDSYLEPDS) are enriched in acidic residues. Residues Tyr-174 and Tyr-183 each carry the phosphotyrosine; by SYK modification. An SH3-binding motif is present at residues 201-210 (PPAYPPPPVP). Composition is skewed to pro residues over residues 202–213 (PAYPPPPVPTPR) and 233–242 (PLLPPPPPKH). Residues 252–266 (EDSKRDPLCPRRAEP) show a composition bias toward basic and acidic residues. Ser-278 carries the post-translational modification Phosphoserine. A compositionally biased stretch (pro residues) spans 342-354 (RGPPTSEPPPVPA). Residues Ser-416 and Ser-427 each carry the phosphoserine modification. Tyr-448 bears the Phosphotyrosine; by SYK mark. Residues 457 to 555 (VFVNTTESCE…HQSLLLRHPY (99 aa)) form the SH2 domain.

In terms of processing, phosphorylated. Phosphorylation at Tyr-448 may stimulate the activity of the LYN kinase. As to expression, expressed in a variety of tissues including lung, liver, skeletal muscle, kidney and pancreas.

Binds differentially to the SH3 domains of certain proteins of signal transduction pathways. Binds to phosphatidylinositols; linking the hemopoietic tyrosine kinase fes to the cytoplasmic membrane in a phosphorylation dependent mechanism. This Homo sapiens (Human) protein is SH3 domain-binding protein 2 (SH3BP2).